A 413-amino-acid polypeptide reads, in one-letter code: MSENCNSRHFSWLMKSCLPNPSDAKSLVQIHQPSSTAANSSATIASLPDDLLLECISRVPSSSIPSLAVVCRRWSRLLHSPYFLHLRRRLGLLRHSLFAISTVDSGLFAADLQFQSEIASWKVSLAVSSRSVGVDGSYGSLSHARAAAIGPRVYVVSRNAVLRYDSWMGTLNLRSPMIFPRKKFAIAVVSGKIYVAGGGGGSEVAAAVEEYDPELNRWEVVTQSARKRYGCIGAAVDGVFYVIGGLKIGNETSRAVAARAYASSMDLFDVESRQWLRSRSVPGGGCVVAACAAVGYVYVLTSHAVELSFWRFDARRRGGNSGFGEWQRLKSPPLPAQVRLDGTVRFSCVGVEDKVAVVQVVGCIDDLLRRSGRGERGIRESLVLLYDTTEGEWRRAADLPEMITRAACACVEW.

One can recognise an F-box domain in the interval 41–90 (SATIASLPDDLLLECISRVPSSSIPSLAVVCRRWSRLLHSPYFLHLRRRL). Kelch repeat units lie at residues 96-141 (SLFA…YGSL), 152-191 (RVYV…VVSG), 192-238 (KIYV…AVDG), 240-295 (FYVI…AAVG), and 367-413 (LLRR…CVEW).

The protein is F-box/kelch-repeat protein At5g26960 of Arabidopsis thaliana (Mouse-ear cress).